The following is a 358-amino-acid chain: Probable isocitrate dehydrogenase [NAD] subunit alpha, mitochondrial (358 aa).

Substrate is bound by residues Arg-108, Arg-118, Arg-139, and Asp-226. The Mg(2+) site is built by Asp-226, Asp-250, and Asp-254.

The protein belongs to the isocitrate and isopropylmalate dehydrogenases family. In terms of assembly, heterooligomer of subunits alpha, beta, and gamma in the apparent ratio of 2:1:1. The cofactor is Mg(2+). Mn(2+) is required as a cofactor.

Its subcellular location is the mitochondrion. It catalyses the reaction D-threo-isocitrate + NAD(+) = 2-oxoglutarate + CO2 + NADH. The protein is Probable isocitrate dehydrogenase [NAD] subunit alpha, mitochondrial (idha-1) of Caenorhabditis elegans.